The chain runs to 374 residues: Histidinol-phosphate aminotransferase (374 aa).

K211 is subject to N6-(pyridoxal phosphate)lysine. A compositionally biased stretch (low complexity) spans 351-368 (GNSSQDSASKSNSSANND). Residues 351-374 (GNSSQDSASKSNSSANNDELNASN) are disordered.

This sequence belongs to the class-II pyridoxal-phosphate-dependent aminotransferase family. Histidinol-phosphate aminotransferase subfamily. As to quaternary structure, homodimer. It depends on pyridoxal 5'-phosphate as a cofactor.

The enzyme catalyses L-histidinol phosphate + 2-oxoglutarate = 3-(imidazol-4-yl)-2-oxopropyl phosphate + L-glutamate. It functions in the pathway amino-acid biosynthesis; L-histidine biosynthesis; L-histidine from 5-phospho-alpha-D-ribose 1-diphosphate: step 7/9. The sequence is that of Histidinol-phosphate aminotransferase from Photobacterium profundum (strain SS9).